Reading from the N-terminus, the 571-residue chain is Urease subunit alpha (571 aa).

The 439-residue stretch at 133–571 (GGIDTHVHFI…LPLTQRYFLF (439 aa)) folds into the Urease domain. Residues histidine 138, histidine 140, and lysine 221 each coordinate Ni(2+). Lysine 221 bears the N6-carboxylysine mark. Histidine 223 contributes to the substrate binding site. Ni(2+)-binding residues include histidine 250 and histidine 276. Histidine 324 functions as the Proton donor in the catalytic mechanism. Position 364 (aspartate 364) interacts with Ni(2+).

It belongs to the metallo-dependent hydrolases superfamily. Urease alpha subunit family. As to quaternary structure, heterotrimer of UreA (gamma), UreB (beta) and UreC (alpha) subunits. Three heterotrimers associate to form the active enzyme. It depends on Ni cation as a cofactor. Post-translationally, carboxylation allows a single lysine to coordinate two nickel ions.

It localises to the cytoplasm. It catalyses the reaction urea + 2 H2O + H(+) = hydrogencarbonate + 2 NH4(+). It functions in the pathway nitrogen metabolism; urea degradation; CO(2) and NH(3) from urea (urease route): step 1/1. The protein is Urease subunit alpha of Staphylococcus saprophyticus subsp. saprophyticus (strain ATCC 15305 / DSM 20229 / NCIMB 8711 / NCTC 7292 / S-41).